The sequence spans 160 residues: Large ribosomal subunit protein bL17 (160 aa).

Basic and acidic residues predominate over residues 123–141 (DEKRQKRAEARAKRREEMQ). A disordered region spans residues 123-160 (DEKRQKRAEARAKRREEMQKAMAEQQQAEGGEPEGGNE). Over residues 142–152 (KAMAEQQQAEG) the composition is skewed to low complexity.

It belongs to the bacterial ribosomal protein bL17 family. In terms of assembly, part of the 50S ribosomal subunit. Contacts protein L32.

The protein is Large ribosomal subunit protein bL17 of Acidobacterium capsulatum (strain ATCC 51196 / DSM 11244 / BCRC 80197 / JCM 7670 / NBRC 15755 / NCIMB 13165 / 161).